Consider the following 1846-residue polypeptide: Unconventional myosin-Vb (1846 aa).

Residues 8–60 (SRYTRVWIPDPDEVWRSAELTKDYKDGDESLQLRLEDDTILDYPIDVQNNQVP) form the Myosin N-terminal SH3-like domain. A requires for interaction with LIMA1 region spans residues 21–40 (VWRSAELTKDYKDGDESLQL). In terms of domain architecture, Myosin motor spans 69–763 (VGENDLTALS…QVAYLEKLRA (695 aa)). 163–170 (GESGAGKT) is an ATP binding site. The segment at 599–629 (VPATNTAKSRSSSKINVRSSRPLMKAPNKEH) is disordered. Residues 607-619 (SRSSSKINVRSSR) are compositionally biased toward low complexity. The segment at 641–663 (LNLLMETLNATTPHYVRCIKPND) is actin-binding. IQ domains follow at residues 767-788 (REAT…KYRR), 789-813 (LRAA…EHLR), 814-837 (RTRA…YCRV), 838-861 (RRAA…PPVL), 862-884 (TEHK…HFQR), and 885-914 (QRDA…EARS). Coiled-coil stretches lie at residues 915–1272 (AEHL…ADQR) and 1334–1450 (LKQV…RHHE). A disordered region spans residues 1088–1122 (RDEQQTPGHRKNPSNQSSLESDSNYPSISTSEIGD). The segment covering 1100 to 1120 (PSNQSSLESDSNYPSISTSEI) has biased composition (polar residues). Residue serine 1444 is modified to Phosphoserine. One can recognise a Dilute domain in the interval 1524-1801 (SSTINGIKKV…IRTIQAQLQE (278 aa)).

The protein belongs to the TRAFAC class myosin-kinesin ATPase superfamily. Myosin family. Component of the CART complex, at least composed of ACTN4, HGS/HRS, MYO5B and TRIM3. Interacts with RAB11FIP2. Interacts with RAB11A and RAB8A. Found in a complex with CFTR and RAB11A. Interacts with NPC1L1. Interacts with LIMA1.

The protein localises to the cytoplasm. Its function is as follows. May be involved in vesicular trafficking via its association with the CART complex. The CART complex is necessary for efficient transferrin receptor recycling but not for EGFR degradation. Required in a complex with RAB11A and RAB11FIP2 for the transport of NPC1L1 to the plasma membrane. Together with RAB11A participates in CFTR trafficking to the plasma membrane and TF (transferrin) recycling in nonpolarized cells. Together with RAB11A and RAB8A participates in epithelial cell polarization. Together with RAB25 regulates transcytosis. Required for proper localization of bile salt export pump ABCB11 at the apical/canalicular plasma membrane of hepatocytes. This Rattus norvegicus (Rat) protein is Unconventional myosin-Vb (Myo5b).